Reading from the N-terminus, the 179-residue chain is MTKKILLAVSGSIAAYKAADLSHQLTKLGYHVNVLMTNAAKQFIPPLTLQVLSKNPVYSNVMKEDDPQVINHIALAKQADLFLLAPASANTLAHLAHGFADNIVTSVALALPLEVPKFFAPAMNTKMYENPITQSNIALLKKFGYKEIQPKSSVLACGDVGSGALADLDTIIQKIEEQL.

N124 is a binding site for substrate. Catalysis depends on C157, which acts as the Proton donor.

It belongs to the HFCD (homooligomeric flavin containing Cys decarboxylase) superfamily. It depends on FMN as a cofactor.

The enzyme catalyses N-[(R)-4-phosphopantothenoyl]-L-cysteine + H(+) = (R)-4'-phosphopantetheine + CO2. It functions in the pathway cofactor biosynthesis; coenzyme A biosynthesis; CoA from (R)-pantothenate: step 3/5. Its function is as follows. Catalyzes the decarboxylation of 4'-phosphopantothenoylcysteine to 4'-phosphopantetheine. This is Probable phosphopantothenoylcysteine decarboxylase (coaC) from Streptococcus mutans serotype c (strain ATCC 700610 / UA159).